A 538-amino-acid polypeptide reads, in one-letter code: Putative cysteine ligase BshC (538 aa).

A coiled-coil region spans residues 460–483; sequence KINEQIELLEKMLKRNVEKKHEVQ.

It belongs to the BshC family.

Its function is as follows. Involved in bacillithiol (BSH) biosynthesis. May catalyze the last step of the pathway, the addition of cysteine to glucosamine malate (GlcN-Mal) to generate BSH. In Bacillus mycoides (strain KBAB4) (Bacillus weihenstephanensis), this protein is Putative cysteine ligase BshC.